The following is a 197-amino-acid chain: Potassium-transporting ATPase KdpC subunit (197 aa).

The helical transmembrane segment at 7–27 (PAFISLILFTLLFGLIYPLTV) threads the bilayer.

It belongs to the KdpC family. In terms of assembly, the system is composed of three essential subunits: KdpA, KdpB and KdpC.

It is found in the cell inner membrane. Part of the high-affinity ATP-driven potassium transport (or Kdp) system, which catalyzes the hydrolysis of ATP coupled with the electrogenic transport of potassium into the cytoplasm. This subunit acts as a catalytic chaperone that increases the ATP-binding affinity of the ATP-hydrolyzing subunit KdpB by the formation of a transient KdpB/KdpC/ATP ternary complex. The chain is Potassium-transporting ATPase KdpC subunit from Beijerinckia indica subsp. indica (strain ATCC 9039 / DSM 1715 / NCIMB 8712).